Here is a 405-residue protein sequence, read N- to C-terminus: Pleckstrin homology-like domain family A member 1 (405 aa).

2 stretches are compositionally biased toward basic and acidic residues: residues 1-11 and 54-63; these read MRRTPAAERLS and RSPEDGREQP. 3 disordered regions span residues 1 to 67, 189 to 217, and 293 to 405; these read MRRT…AHGS, QLQQ…VASL, and QQHL…SNSA. The PH domain maps to 153 to 277; the sequence is ALKEGVLEKR…AEITLQMVQY (125 aa). The span at 189-202 shows a compositional bias: low complexity; that stretch reads QLQQQQQQQQPGQG. The segment covering 204–213 has biased composition (polar residues); the sequence is AEPSQPSGPT. Positions 294 to 309 are enriched in low complexity; it reads QHLVQQQPPQTQQIQP. The segment at 309 to 344 is 16 X 2 AA repeats of P-Q; the sequence is PQPQPQIQPQPQPQIQPQPQPQPQPQPQPQPQPQPQ. Residues 310–342 show a composition bias toward pro residues; the sequence is QPQPQIQPQPQPQIQPQPQPQPQPQPQPQPQPQ. The segment covering 350 to 376 has biased composition (basic residues); it reads PHPHPHPYSHPHQHPHPHPHPHPHPHP. The interval 354–377 is 11 X 2 AA repeats of P-H; it reads PHPYSHPHQHPHPHPHPHPHPHPH. The span at 378 to 389 shows a compositional bias: low complexity; the sequence is PYQLQHAHQPLH.

In terms of assembly, interacts with RPL14, EIF3S7 and PABPC4. Widely expressed with very high levels in adult liver and high levels in adult lung. According to PubMed:10428057 expressed at low levels in liver. Expressed at increased levels in atherosclerotic lesions observed in hyperhomocysteinema.

It localises to the cytoplasm. The protein localises to the cytoplasmic vesicle. Its subcellular location is the nucleus. It is found in the nucleolus. Seems to be involved in regulation of apoptosis. May be involved in detachment-mediated programmed cell death. May mediate apoptosis during neuronal development. May be involved in regulation of anti-apoptotic effects of IGF1. Required for TCR-induced apoptosis and expression of TNFRSF6/FAS in a T-cell hybridoma cell line. May be involved in translational regulation. The chain is Pleckstrin homology-like domain family A member 1 (Phlda1) from Mus musculus (Mouse).